Reading from the N-terminus, the 473-residue chain is Calcium/calmodulin-dependent protein kinase type IV (473 aa).

Phosphoserine; by autocatalysis is present on residues Ser12 and Ser13. In terms of domain architecture, Protein kinase spans 46-300 (FEVESELGRG…TFQALQHPWV (255 aa)). Residues 52–60 (LGRGATSIV) and Lys75 contribute to the ATP site. Thr57 carries an O-linked (GlcNAc) threonine glycan. The O-linked (GlcNAc) serine glycan is linked to Ser58. A glycan (O-linked (GlcNAc) serine) is linked at Ser137. Asp164 (proton acceptor) is an active-site residue. A glycan (O-linked (GlcNAc) serine) is linked at Ser189. Thr200 is subject to Phosphothreonine; by CaMKK1 and CaMKK2. Residues 305 to 321 (ANFVHMDTAQKKLQEFN) form an autoinhibitory domain region. Residues 306–323 (NFVHMDTAQKKLQEFNAR) form a PP2A-binding region. The segment at 322–341 (ARRKLKAAVKAVVASSRLGS) is calmodulin-binding. Ser336 is modified (phosphoserine; by autocatalysis). Ser341 carries the phosphoserine modification. The span at 341 to 350 (SASSSHGSIQ) shows a compositional bias: low complexity. Disordered regions lie at residues 341–368 (SASS…GNED) and 445–473 (EEAA…LPEY). O-linked (GlcNAc) serine glycosylation is found at Ser344, Ser345, and Ser356. Position 360 is a phosphoserine (Ser360).

It belongs to the protein kinase superfamily. CAMK Ser/Thr protein kinase family. CaMK subfamily. As to quaternary structure, monomer. Interacts with protein phosphatase 2A (PPP2CA/PPP2CB); the interaction is mutually exclusive with binding to Ca(2+)/calmodulin. Phosphorylated by CaMKK1 and CaMKK2 on Thr-200. Dephosphorylated by protein phosphatase 2A. Autophosphorylated on Ser-12 and Ser-13. Post-translationally, glycosylation at Ser-189 modulates the phosphorylation of CaMK4 at Thr-200 and negatively regulates its activity toward CREB1 in basal conditions and during early inomycin stimulation. As to expression, expressed in brain, thymus, CD4 T-cells, testis and epithelial ovarian cancer tissue.

It localises to the cytoplasm. The protein resides in the nucleus. The enzyme catalyses L-seryl-[protein] + ATP = O-phospho-L-seryl-[protein] + ADP + H(+). It catalyses the reaction L-threonyl-[protein] + ATP = O-phospho-L-threonyl-[protein] + ADP + H(+). Its activity is regulated as follows. Activated by Ca(2+)/calmodulin. Binding of calmodulin results in conformational change that relieves intrasteric autoinhibition and allows phosphorylation of Thr-200 within the activation loop by CaMKK1 or CaMKK2. Phosphorylation of Thr-200 results in a 10-20-fold increase in total activity to generate Ca(2+)/calmodulin-independent activity. Autophosphorylation of the N-terminus Ser-12 and Ser-13 is required for full activation. Inactivated by protein phosphatase 2A (PPP2CA/PPP2CB) which dephosphorylates Thr-200, thereby terminating autonomous activity and helping to maintain the enzyme in its autoinhibited state. Functionally, calcium/calmodulin-dependent protein kinase that operates in the calcium-triggered CaMKK-CaMK4 signaling cascade and regulates, mainly by phosphorylation, the activity of several transcription activators, such as CREB1, MEF2D, JUN and RORA, which play pivotal roles in immune response, inflammation, and memory consolidation. In the thymus, regulates the CD4(+)/CD8(+) double positive thymocytes selection threshold during T-cell ontogeny. In CD4 memory T-cells, is required to link T-cell antigen receptor (TCR) signaling to the production of IL2, IFNG and IL4 (through the regulation of CREB and MEF2). Regulates the differentiation and survival phases of osteoclasts and dendritic cells (DCs). Mediates DCs survival by linking TLR4 and the regulation of temporal expression of BCL2. Phosphorylates the transcription activator CREB1 on 'Ser-133' in hippocampal neuron nuclei and contribute to memory consolidation and long term potentiation (LTP) in the hippocampus. Can activate the MAP kinases MAPK1/ERK2, MAPK8/JNK1 and MAPK14/p38 and stimulate transcription through the phosphorylation of ELK1 and ATF2. Can also phosphorylate in vitro CREBBP, PRM2, MEF2A and STMN1/OP18. In Homo sapiens (Human), this protein is Calcium/calmodulin-dependent protein kinase type IV (CAMK4).